A 151-amino-acid polypeptide reads, in one-letter code: Single-stranded DNA-binding protein, mitochondrial (151 aa).

The N-terminal 16 residues, Met1 to Gln16, are a transit peptide targeting the mitochondrion. Positions Leu30 to Ser141 constitute an SSB domain. 2 positions are modified to phosphoserine: Ser67 and Ser79. Lys113 carries the post-translational modification N6-acetyllysine. Position 122 is an N6-succinyllysine (Lys122).

Homotetramer. Interacts with MPG/AAG, through inhibition of its glycosylase activity it potentially prevents formation of DNA breaks in ssDNA, ensuring that base removal primarily occurs in dsDNA. Interacts with POLDIP2. Interacts with PRIMPOL.

The protein resides in the mitochondrion. It is found in the mitochondrion matrix. Its subcellular location is the mitochondrion nucleoid. Binds preferentially and cooperatively to pyrimidine rich single-stranded DNA (ss-DNA). In vitro, required to maintain the copy number of mitochondrial DNA (mtDNA) and plays a crucial role during mtDNA replication by stimulating the activity of the replisome components POLG and TWNK at the replication fork. Promotes the activity of the gamma complex polymerase POLG, largely by organizing the template DNA and eliminating secondary structures to favor ss-DNA conformations that facilitate POLG activity. In addition it is able to promote the 5'-3' unwinding activity of the mtDNA helicase TWNK. May also function in mtDNA repair. This chain is Single-stranded DNA-binding protein, mitochondrial (Ssbp1), found in Rattus norvegicus (Rat).